Consider the following 2189-residue polypeptide: Chromatin modification-related protein eaf-1 (2189 aa).

Disordered regions lie at residues 183–400 (VQGS…SGAE), 415–438 (VIGKAGVAGPHGAHSTGGLQTQHP), and 477–601 (EVAK…PPGL). The segment covering 234–253 (PTPQTVAPPATAPTSTTKTA) has biased composition (low complexity). Basic and acidic residues predominate over residues 260–277 (AGPKDDTVSRGDAEEKAR). Polar residues-rich tracts occupy residues 281–293 (TITSVNQLLSNGD), 300–312 (TLSSPSSTVQSAP), and 319–333 (ASASTSPDNEASQSF). Positions 336–349 (PVSRPEQELRRATT) are enriched in basic and acidic residues. Over residues 534 to 543 (QPQPSSTAPS) the composition is skewed to low complexity. Residues 573–583 (ETQARTSQSSH) are compositionally biased toward polar residues. Positions 722–797 (PVRCLEPARP…PPVRAVDNAD (76 aa)) constitute an HSA domain. In terms of domain architecture, Myb-like spans 985–1045 (FESRIASQWT…ECFERWVNLE (61 aa)). Low complexity-rich tracts occupy residues 1320-1330 (VAVQLQQQQHQ) and 1336-1406 (QHPQ…QVTQ). Disordered regions lie at residues 1320-1428 (VAVQ…PMRP), 1622-1644 (MQTQTPAHQPHQPQAQPHVQAQA), 1663-1831 (QKQA…GQVQ), and 1846-2189 (VQGQ…APTK). 5 stretches are compositionally biased toward low complexity: residues 1663 to 1808 (QKQA…QGQG), 1818 to 1831 (GQGHAQGQVQGQVQ), 1846 to 1863 (VQGQVQGQAPGQVQPQHA), 1873 to 2089 (QHAQ…QPQQ), and 2097 to 2189 (SQPQ…APTK).

Belongs to the EAF1 family. Component of the NuA4 histone acetyltransferase complex.

The protein resides in the nucleus. In terms of biological role, component of the NuA4 histone acetyltransferase complex which is involved in transcriptional activation of selected genes principally by acetylation of nucleosomal histone H4 and H2A. The NuA4 complex is also involved in DNA repair. This Neurospora crassa (strain ATCC 24698 / 74-OR23-1A / CBS 708.71 / DSM 1257 / FGSC 987) protein is Chromatin modification-related protein eaf-1 (eaf-1).